The sequence spans 81 residues: Defensin-like protein 153 (81 aa).

Positions 1–26 are cleaved as a signal peptide; sequence MKNVSQVSVAVLLIFSILVLGIGVQG. Intrachain disulfides connect Cys30-Cys81, Cys41-Cys60, Cys46-Cys75, and Cys50-Cys77.

It belongs to the DEFL family.

The protein localises to the secreted. The polypeptide is Defensin-like protein 153 (LCR31) (Arabidopsis thaliana (Mouse-ear cress)).